Reading from the N-terminus, the 136-residue chain is TBK1 inhibitor DP96R (136 aa).

Positions 66 to 86 are disordered; sequence NNALEKPAGANNIPEKSAGRM.

The protein belongs to the asfivirus DP96R family.

Inhibits cGAS-STING-mediated type I IFN expression and NF-kB activation by inhibiting TBK1 and IKBKB/IKKB. Inhibits host TBK1 phosphorylation. The protein is TBK1 inhibitor DP96R of Ornithodoros (relapsing fever ticks).